A 1128-amino-acid chain; its full sequence is Inactive phospholipase C-like protein 2 (1128 aa).

The tract at residues 1–129 is disordered; that stretch reads MAECGRGAAG…KKTVSFSSMP (129 aa). At Ala-2 the chain carries N-acetylalanine. Residue Ser-16 is modified to Phosphoserine. The span at 20–30 shows a compositional bias: low complexity; it reads ALGAKGALKAG. The span at 31–43 shows a compositional bias: gly residues; sequence AGEGGGGGGGGRL. Position 85 is a phosphothreonine (Thr-85). The PH domain occupies 142 to 252; the sequence is NSMVEGSELK…WVTGLRYLIS (111 aa). One can recognise a PI-PLC X-box domain in the interval 427-571; it reads QDMKQPLSHY…LKGKILIKAK (145 aa). Phosphothreonine is present on Thr-585. The region spanning 619-735 is the PI-PLC Y-box domain; it reads LSELVSICKS…GYVLRPAIMR (117 aa). Residues 735–864 form the C2 domain; that stretch reads REEVSFFSAN…TGYRHVPLQS (130 aa). The tract at residues 1100 to 1128 is disordered; it reads KPGTENSEAQKPRRSLEAIPEKASDENGD. Over residues 1107–1128 the composition is skewed to basic and acidic residues; sequence EAQKPRRSLEAIPEKASDENGD. Ser-1114 carries the post-translational modification Phosphoserine.

Ubiquitously expressed, with a strong expression in skeletal muscle.

It is found in the cytoplasm. Its function is as follows. May play an role in the regulation of Ins(1,4,5)P3 around the endoplasmic reticulum. This chain is Inactive phospholipase C-like protein 2 (Plcl2), found in Mus musculus (Mouse).